The following is a 438-amino-acid chain: Probable chaperone protein ClpB 1 (438 aa).

The stretch at 1–94 (MNTADTRQRL…NNRKIEARQA (94 aa)) forms a coiled coil. Residues 1–118 (MNTADTRQRL…IADIVSRWTG (118 aa)) are linker. The interval 128–345 (ERQKLLGIES…RIDEVILFTP (218 aa)) is NBD2. 178–185 (GPTGVGKT) contacts ATP. The interval 346–438 (LTRENLREIV…ENDAIVMKKK (93 aa)) is C-terminal.

The protein belongs to the ClpA/ClpB family. As to quaternary structure, homohexamer. The oligomerization is ATP-dependent.

The protein localises to the cytoplasm. Functionally, part of a stress-induced multi-chaperone system, it is involved in the recovery of the cell from heat-induced damage, in cooperation with DnaK, DnaJ and GrpE. Acts before DnaK, in the processing of protein aggregates. Protein binding stimulates the ATPase activity; ATP hydrolysis unfolds the denatured protein aggregates, which probably helps expose new hydrophobic binding sites on the surface of ClpB-bound aggregates, contributing to the solubilization and refolding of denatured protein aggregates by DnaK. The chain is Probable chaperone protein ClpB 1 (clpB1) from Chlorobaculum tepidum (strain ATCC 49652 / DSM 12025 / NBRC 103806 / TLS) (Chlorobium tepidum).